A 355-amino-acid chain; its full sequence is MERGLHLGAAAASEDDLFLHKSLGTSAAKRLEAAFRSTPPGMDLSLAPPTRERPASSSSPLGCFEPADPEGAGLRLPPPGGGGGASGGGGGVSVPGLLVGSAGVGGEPSLSSLPAGAALCLKYGESAGRGSVAESSGGEQSPDDDSDGLCELVLRAGGPDPRASPRAGGGSAKVAEGCSNAHLHGGSGLPPGGPTSGGGSGGGGGGSSKKSKEQKALRLNINARERRRMHDLNDALDELRAVIPYAHSPSVRKLSKIATLLLAKNYILMQAQALEEMRRLVAYLNQGQAISAASLPSSAAAAAAAAALHPALGAYEQAAGYPFSAGLPPAASCPEKCALFNSVSSSLCKQCTEKP.

Disordered regions lie at residues 34–90 (AFRS…GGGG) and 128–215 (GRGS…KEQK). 2 stretches are compositionally biased toward gly residues: residues 81–90 (GGGGASGGGG) and 185–207 (GGSG…GGGS). A bHLH domain is found at 216-270 (ALRLNINARERRRMHDLNDALDELRAVIPYAHSPSVRKLSKIATLLLAKNYILMQ).

As to quaternary structure, interacts with PRDM8. Brain-specific, with the highest expression in the cerebellum.

The protein resides in the nucleus. Functionally, inhibits DNA binding of TCF3/E47 homodimers and TCF3 (E47)/NEUROD1 heterodimers and acts as a strong repressor of Neurod1 and Myod-responsive genes, probably by heterodimerization with class a basic helix-loop-helix factors. Despite the presence of an intact basic domain, does not bind to DNA. In the brain, may function as an area-specific transcription factor that regulates the postmitotic acquisition of area identities and elucidate the genetic hierarchy between progenitors and postmitotic neurons driving neocortical arealization. May be required for the survival of a specific population of inhibitory neurons in the superficial laminae of the spinal cord dorsal horn that may regulate pruritis. Seems to play a crucial role in the retinogenesis, in the specification of amacrine and bipolar subtypes. Forms with PRDM8 a transcriptional repressor complex controlling genes involved in neural development and neuronal differentiation. The polypeptide is Class E basic helix-loop-helix protein 22 (Bhlhe22) (Mus musculus (Mouse)).